A 1410-amino-acid polypeptide reads, in one-letter code: non-specific serine/threonine protein kinase (1410 aa).

Residues 27–299 (THYVSQLNNS…LLEKYRTIYF (273 aa)) enclose the Protein kinase domain. ATP-binding positions include 33–41 (LNNSRFLKT) and Lys54. Asp147 (proton acceptor) is an active-site residue. HEAT repeat units follow at residues 441–478 (TKLDRTLPYLVAALEDDSTRVKVMAMNCVTTLIKEVKH), 485–525 (NIFV…KANL), 556–594 (RKLQQLFEDLTVSILTDPEISVKVALLKNILPLCKYFGR), 596–633 (KTNDVILSHLITYLNDRDPALRMYLVECISGIAILLGP), and 635–672 (TMEQYILPLIIQTITDEEELVVVSVLKNLKDLLKTRFV). WD repeat units follow at residues 1037 to 1076 (FDGTLLQSEVLLGTKSFMIYGSDQGALTVWDIDRLANEKS), 1187 to 1226 (ADYGCTISMVLDDKNNLLFFGTVSGIIEMWDARYFVQIRA), and 1230 to 1273 (GESL…CKHV).

Belongs to the protein kinase superfamily. Ser/Thr protein kinase family. Component of the autophagy-specific VPS34 PI3-kinase complex I composed of VPS15, VPS30, VPS34, ATG14 and ATG38; and of the VPS34 PI3-kinase complex II composed of VPS15, VPS30, VPS34 and VPS38. Autophosphorylated.

The protein resides in the golgi apparatus. The protein localises to the trans-Golgi network membrane. It is found in the endosome membrane. The catalysed reaction is L-seryl-[protein] + ATP = O-phospho-L-seryl-[protein] + ADP + H(+). It catalyses the reaction L-threonyl-[protein] + ATP = O-phospho-L-threonyl-[protein] + ADP + H(+). Functionally, serine/threonine-protein kinase that plays a role in signaling in modulation of host immune response, intracellular survival and virulence. Required for impediment of phagosomal maturation in THP-1 macrophages. Regulatory subunit of the autophagy-specific VPS34 PI3-kinase complex I essential to recruit the ATG8-phosphatidylinositol conjugate and the ATG12-ATG5 conjugate to the pre-autophagosomal structure. Within the PS34 PI3-kinase complex I, VPS15-mediated phosphorylation of VPS34 may be required for recruiting VPS34 to the membrane but not for activation of its PI3K activity. Is also involved in endosome-to-Golgi retrograde transport as part of the VPS34 PI3-kinase complex II. This second complex is required for the endosome-to-Golgi retrieval of PEP1 and KEX2, and the recruitment of VPS5 and VPS7, two components of the retromer complex, to endosomal membranes (probably through the synthesis of a specific pool of phosphatidylinositol 3-phosphate recruiting the retromer to the endosomes). By regulating VPS34 kinase activity, VPS15 appears to be essential for the efficient delivery of soluble hydrolases to the yeast vacuole. The sequence is that of non-specific serine/threonine protein kinase from Candida glabrata (strain ATCC 2001 / BCRC 20586 / JCM 3761 / NBRC 0622 / NRRL Y-65 / CBS 138) (Yeast).